Here is a 257-residue protein sequence, read N- to C-terminus: Gene 3 protein (257 aa).

Over residues Ser-163–His-176 the composition is skewed to polar residues. Residues Ser-163–Phe-257 are disordered. Positions Ser-214–Thr-240 are enriched in basic and acidic residues.

This Equine herpesvirus 1 (strain Ab4p) (EHV-1) protein is Gene 3 protein.